Here is a 248-residue protein sequence, read N- to C-terminus: Probable transcriptional regulatory protein BOV_1660 (248 aa).

It belongs to the TACO1 family.

The protein resides in the cytoplasm. This chain is Probable transcriptional regulatory protein BOV_1660, found in Brucella ovis (strain ATCC 25840 / 63/290 / NCTC 10512).